Consider the following 1188-residue polypeptide: MAGHEVRYGKHRTRRSFSRIKEVLDLPNLIEIQTDSFQDFLDSGLKEVFEDVLPISNFTDTMELEFVGYEFKEPKYTLEEARIHDASYSAPIFVTFRLVNKETGEIKTQEVFFGDFPIMTEMGTFIINGGERIIVSQLVRSPGVYFNDKVDKNGKVGYGSTVIPNRGAWLELETDSKDIAYTRIDRTRKIPFTTLVRALGFSGDDEIVDIFGESDLVRNTIEKDIHKNPSDSRTDEALKEIYERLRPGEPKTADSSRSLLIARFFDARRYDLAAVGRYKVNKKLNIKTRLLNQIIAENLVDAETGEILVEAGTEMTRSVIESIEEHLDGDLNKFVYTPNDYAVVTEPVVLQKFKVVSPIDPDRVVTIVGNANPDDKVRALTPADILAEMSYFLNLAEGLGKVDDIDHLGNRRIRAVGELLANQFRIGLARMERNVRERMSVQDNDVLTPQQIINIRPVTAAVKEFFGSSQLSQFMDQHNPLSELSHKRRLSALGPGGLTRDRAGYEVRDVHYTHYGRMCPIETPEGPNIGLINNLSSFGHLNKYGFIQTPYRKVDRATGRVTNEIVWLTADEEDEYTVAQANSKLNEDGTFAEEIVMGRHQGNNQEFSASVVDFVDVSPKQVVAVATACIPFLENDDSNRALMGANMQRQAVPLIDPKAPYVGTGMEYQAAHDSGAAVIAQHNGKVVFSDAEKVEIRRQDGSLDVYHITKFRRSNSGTAYNQRTLVKVGDIVEKGDFIADGPSMENGEMALGQNPVVAYMTWEGYNFEDAVIMSERLVKEDVYTSVHLEEFESETRDTKLGPEEITREIPNVGEEALKDLDEMGIIRIGAEVKEGDILVGKVTPKGEKDLSAEERLLHAIFGDKSREVRDTSLRVPHGGDGIVRDVKIFTRANGDELQSGVNMLVRVYIAQKRKIKVGDKMAGRHGNKGVVSRIVPVEDMPYLPDGTPVDIMLNPLGVPSRMNIGQVMELHLGMAARNLGIHIATPVFDGASSEDLWDTVREAGMDSDAKTVLYDGRTGEPFDNRVSVGVMYMIKLHHMVDDKLHARSVGPYSLVTQQPLGGKAQFGGQRFGEMEVWALEAYGASNVLQEILTYKSDDVTGRLKAYEAITKGKPIPKPGVPESFRVLVKELQSLGLDMRVLDEDDNEVELRDLDEGEDDDIMHVDDLEKAREKQAQETQEVSETTDEK.

The protein belongs to the RNA polymerase beta chain family. In terms of assembly, the RNAP catalytic core consists of 2 alpha, 1 beta, 1 beta' and 1 omega subunit. When a sigma factor is associated with the core the holoenzyme is formed, which can initiate transcription.

It catalyses the reaction RNA(n) + a ribonucleoside 5'-triphosphate = RNA(n+1) + diphosphate. Its function is as follows. DNA-dependent RNA polymerase catalyzes the transcription of DNA into RNA using the four ribonucleoside triphosphates as substrates. This is DNA-directed RNA polymerase subunit beta from Streptococcus pyogenes serotype M3 (strain ATCC BAA-595 / MGAS315).